A 427-amino-acid polypeptide reads, in one-letter code: Thyroid hormone receptor alpha-A (427 aa).

The span at 1 to 11 shows a compositional bias: basic and acidic residues; sequence MENTEQEHNLP. The disordered stretch occupies residues 1-40; the sequence is MENTEQEHNLPEGDETQWPNGVKRKRKNSQCSMNSTSDKS. The segment at 1-56 is modulating; sequence MENTEQEHNLPEGDETQWPNGVKRKRKNSQCSMNSTSDKSISVPGYVPSYLEKDEP. Residues 29–40 show a composition bias toward polar residues; it reads SQCSMNSTSDKS. 2 consecutive NR C4-type zinc fingers follow at residues 57-77 and 95-119; these read CVVCGDKATGYHYRCITCEGC and CKYDSCCIIDKITRNQCQLCRFRKC. Residues 57–131 constitute a DNA-binding region (nuclear receptor); it reads CVVCGDKATG…VGMAMDLVLD (75 aa). Positions 167–410 constitute an NR LBD domain; sequence SEWELIRMVT…PPLFLEVFED (244 aa).

The protein belongs to the nuclear hormone receptor family. NR1 subfamily. As to quaternary structure, interacts with ncoa2. After the mid-blastula transition (MBT), expressed throughout the deep cells, which give rise to the embryo proper. In adults, isoform 2 shows highest expression in the eye and liver. Expressed in adult gonads.

The protein localises to the nucleus. Its function is as follows. High affinity receptor for triiodothyronine. In the absence of thyroid hormone during late blastula stage development, acts as a transcriptional repressor. Whereas in the presence of thyroid hormone, can act as an activator of transcription. In addition, represses retinoic acid (RA)-signaling during blastula and gastrula stages of development. This Danio rerio (Zebrafish) protein is Thyroid hormone receptor alpha-A (thraa).